The chain runs to 305 residues: Tyrosine recombinase XerD (305 aa).

The Core-binding (CB) domain occupies 2–87; the sequence is SQGEAWADAF…AVRQFYRFVL (86 aa). One can recognise a Tyr recombinase domain in the interval 108-295; sequence PLPKVLERDE…AGEHLAHIVQ (188 aa). Catalysis depends on residues Arg149, Lys173, His247, Arg250, and His273. Catalysis depends on Tyr282, which acts as the O-(3'-phospho-DNA)-tyrosine intermediate.

The protein belongs to the 'phage' integrase family. XerD subfamily. Forms a cyclic heterotetrameric complex composed of two molecules of XerC and two molecules of XerD.

The protein resides in the cytoplasm. Its function is as follows. Site-specific tyrosine recombinase, which acts by catalyzing the cutting and rejoining of the recombining DNA molecules. The XerC-XerD complex is essential to convert dimers of the bacterial chromosome into monomers to permit their segregation at cell division. It also contributes to the segregational stability of plasmids. The protein is Tyrosine recombinase XerD of Caulobacter vibrioides (strain ATCC 19089 / CIP 103742 / CB 15) (Caulobacter crescentus).